The sequence spans 473 residues: Hyaluronidase-2 (473 aa).

The N-terminal stretch at 1-20 (MWTGLGPAVTLALVLVVAWA) is a signal peptide. Intrachain disulfides connect Cys47–Cys343 and Cys214–Cys230. N-linked (GlcNAc...) asparagine glycosylation is found at Asn77 and Asn106. Catalysis depends on Glu138, which acts as the Proton donor. N-linked (GlcNAc...) asparagine glycans are attached at residues Asn340 and Asn360. The region spanning 364-442 (AAQYCSWAQC…YLGWGGEQCQ (79 aa)) is the EGF-like domain. 3 cysteine pairs are disulfide-bonded: Cys368-Cys379, Cys373-Cys430, and Cys432-Cys441. Gly451 is lipidated: GPI-anchor amidated glycine. Residues 452–473 (ASGAWAGSHLTGLLAVAVLAFT) constitute a propeptide, removed in mature form.

The protein belongs to the glycosyl hydrolase 56 family. Interacts with MST1R.

The protein resides in the cell membrane. It catalyses the reaction Random hydrolysis of (1-&gt;4)-linkages between N-acetyl-beta-D-glucosamine and D-glucuronate residues in hyaluronate.. Functionally, catalyzes hyaluronan degradation into small fragments that are endocytosed and degraded in lysosomes by HYAL1 and exoglycosidases. Essential for the breakdown of extracellular matrix hyaluronan. This chain is Hyaluronidase-2 (HYAL2), found in Bos taurus (Bovine).